The sequence spans 878 residues: Alanine--tRNA ligase (878 aa).

Zn(2+) contacts are provided by histidine 570, histidine 574, cysteine 672, and histidine 676. The interval 844–864 is disordered; the sequence is GGKGGGGRPDMAQAGGPDASA. Low complexity predominate over residues 855-864; the sequence is AQAGGPDASA.

Belongs to the class-II aminoacyl-tRNA synthetase family. It depends on Zn(2+) as a cofactor.

The protein resides in the cytoplasm. It catalyses the reaction tRNA(Ala) + L-alanine + ATP = L-alanyl-tRNA(Ala) + AMP + diphosphate. Functionally, catalyzes the attachment of alanine to tRNA(Ala) in a two-step reaction: alanine is first activated by ATP to form Ala-AMP and then transferred to the acceptor end of tRNA(Ala). Also edits incorrectly charged Ser-tRNA(Ala) and Gly-tRNA(Ala) via its editing domain. The sequence is that of Alanine--tRNA ligase from Paramagnetospirillum magneticum (strain ATCC 700264 / AMB-1) (Magnetospirillum magneticum).